The sequence spans 409 residues: Elongation factor Tu (409 aa).

Residues 10–214 (KPHVNVGTIG…AVDNYIPTPE (205 aa)) form the tr-type G domain. Residues 19–26 (GHVDHGKT) are G1. 19 to 26 (GHVDHGKT) contributes to the GTP binding site. Residue Thr-26 participates in Mg(2+) binding. Residues 60-64 (GITIN) form a G2 region. Residues 81 to 84 (DCPG) are G3. GTP contacts are provided by residues 81-85 (DCPGH) and 136-139 (NKVD). The interval 136–139 (NKVD) is G4. The interval 174–176 (SGL) is G5.

It belongs to the TRAFAC class translation factor GTPase superfamily. Classic translation factor GTPase family. EF-Tu/EF-1A subfamily. As to quaternary structure, monomer.

Its subcellular location is the cytoplasm. It catalyses the reaction GTP + H2O = GDP + phosphate + H(+). Its function is as follows. GTP hydrolase that promotes the GTP-dependent binding of aminoacyl-tRNA to the A-site of ribosomes during protein biosynthesis. This chain is Elongation factor Tu, found in Thermosynechococcus vestitus (strain NIES-2133 / IAM M-273 / BP-1).